A 215-amino-acid polypeptide reads, in one-letter code: Probable nicotinate-nucleotide adenylyltransferase (215 aa).

The protein belongs to the NadD family.

The enzyme catalyses nicotinate beta-D-ribonucleotide + ATP + H(+) = deamido-NAD(+) + diphosphate. Its pathway is cofactor biosynthesis; NAD(+) biosynthesis; deamido-NAD(+) from nicotinate D-ribonucleotide: step 1/1. Its function is as follows. Catalyzes the reversible adenylation of nicotinate mononucleotide (NaMN) to nicotinic acid adenine dinucleotide (NaAD). The polypeptide is Probable nicotinate-nucleotide adenylyltransferase (Coxiella burnetii (strain Dugway 5J108-111)).